The chain runs to 258 residues: Acetylglutamate kinase (258 aa).

Residues 41 to 42 (GG), R63, and N156 each bind substrate.

It belongs to the acetylglutamate kinase family. ArgB subfamily.

It is found in the cytoplasm. The catalysed reaction is N-acetyl-L-glutamate + ATP = N-acetyl-L-glutamyl 5-phosphate + ADP. The protein operates within amino-acid biosynthesis; L-arginine biosynthesis; N(2)-acetyl-L-ornithine from L-glutamate: step 2/4. Its function is as follows. Catalyzes the ATP-dependent phosphorylation of N-acetyl-L-glutamate. This is Acetylglutamate kinase from Bacillus licheniformis (strain ATCC 14580 / DSM 13 / JCM 2505 / CCUG 7422 / NBRC 12200 / NCIMB 9375 / NCTC 10341 / NRRL NRS-1264 / Gibson 46).